We begin with the raw amino-acid sequence, 3619 residues long: BEACH domain-containing protein lvsA (3619 aa).

Disordered stretches follow at residues 1–117, 648–709, 1101–1129, 1367–1390, 1636–1658, 1893–1924, and 1964–1999; these read MFRR…NNNN, KIDD…EKEA, NNNNNNSSNNSNNSNNSNNNNNNNNNNDQ, SPNLTGLQNNNNNNNNSGGSNSKK, IPTPSSSSSSSSTSSTSSRRKSI, SSISSNISSSSSSSTLVNSSNSNNNNNTPTSG, and QQAALKKKNRMSIQSSPFQSKNLGTGGDDSVTNTPN. The segment covering 17 to 30 has biased composition (pro residues); the sequence is PQVPHSPGHPPHQP. Composition is skewed to low complexity over residues 31 to 59, 68 to 87, 97 to 117, 656 to 689, 1101 to 1127, 1375 to 1387, 1640 to 1652, and 1893 to 1923; these read PQQQQQQQQQQQQQQQQQQQQQQQQQQPQ, SVSSPIGSTTSSNSTSSFSS, EESSSINSNNNNNNNKNNNNN, NNNNNNNNNNNNNNNNNNNDNDNNNNNDNNNEEN, NNNNNNSSNNSNNSNNSNNNNNNNNNN, NNNNNNNNSGGSN, SSSSSSSSTSSTS, and SSISSNISSSSSSSTLVNSSNSNNNNNTPTS. Residues 94 to 133 form a WD 1 repeat; the sequence is SATEESSSINSNNNNNNNKNNNNNNNSNIIESNINVWTIM. Positions 1974–1986 are enriched in polar residues; sequence MSIQSSPFQSKNL. A coiled-coil region spans residues 2234-2258; that stretch reads VKILEKLEADRVGLQKTVQSLYKSL. The WD 2 repeat unit spans residues 2294–2335; it reads LDSDFMNAFCYPLYKLVISDQHEHVDNSIKLWRLLLSLKTSS. 2 disordered regions span residues 2403–2457 and 2596–2785; these read KKQH…ITKK and NTSS…SEDE. Residues 2440-2452 are compositionally biased toward basic and acidic residues; the sequence is DRKDQSHQEEKSK. The segment covering 2596-2662 has biased composition (low complexity); it reads NTSSITNNNN…TTTPQQSSSQ (67 aa). Polar residues-rich tracts occupy residues 2663–2687 and 2694–2725; these read IKVSSPELSSNEITPPTSPVQSSSE and KLQSSTVEGQLSRNPSSSELFNDNSSTISEEN. 2 stretches are compositionally biased toward low complexity: residues 2726 to 2735 and 2742 to 2764; these read SSLTSASTTL and TQTTTTTTTSTPTTQSSVATTTT. In terms of domain architecture, BEACH-type PH spans 2807 to 2932; the sequence is KDPRLNGIMY…TRDEVYHTLV (126 aa). Residues 2940 to 2971 form a disordered region; it reads TIGGDAQGITGGQTGNDDNDDHHGGGGGRGVR. The span at 2944–2953 shows a compositional bias: gly residues; it reads DAQGITGGQT. The span at 2959 to 2971 shows a compositional bias: basic and acidic residues; sequence DDHHGGGGGRGVR. Positions 2972-3270 constitute a BEACH domain; that stretch reads DRFTSIWRKS…QLFDKPHPKR (299 aa). 5 WD repeats span residues 3347–3386, 3389–3428, 3431–3471, 3474–3518, and 3563–3602; these read HHDGPLTCLTATEDGRICVSGGSDSLICVYNLKRFSLAKR, GHTGSITCVSASRPYSIIVSGSDDRTCIIWDLNRLCYVRS, AHEG…NYKT, IAND…LPDN, and SHSTAITSIFLTNDQQKFYTGDITGRVCMWSDNEASQVKQ. The disordered stretch occupies residues 3516 to 3539; the sequence is PDNNNSNNNNNNNNNNNNNATQIP. Residues 3518–3534 show a composition bias toward low complexity; the sequence is NNNSNNNNNNNNNNNNN.

The protein localises to the contractile vacuole membrane. Its function is as follows. Involved in myosin-independent cytokinesis and early steps of phagocytosis. Also involved in contractile vacuole-mediated osmoregulation. This Dictyostelium discoideum (Social amoeba) protein is BEACH domain-containing protein lvsA (lvsA).